Reading from the N-terminus, the 1009-residue chain is Rho-type GTPase-activating protein 2 (1009 aa).

LIM zinc-binding domains lie at 11–68 and 69–129; these read SLCV…DCSD and KCTN…LLRK. The segment covering 143–155 has biased composition (basic and acidic residues); that stretch reads KEDFPIKLPERSV. Disordered stretches follow at residues 143 to 228, 358 to 433, 449 to 608, 664 to 709, and 723 to 780; these read KEDF…RTVS, TKEN…LSRS, TSEM…DATD, TREK…ASPK, and QVGD…DYTP. Residues 162–196 are compositionally biased toward polar residues; it reads TRINGKSDVSTNNTAISKNLVSSNEDQQLTPQVLV. Basic and acidic residues predominate over residues 212–222; it reads DNSKDREETSS. 2 stretches are compositionally biased toward polar residues: residues 363–385 and 399–414; these read KSSQ…ITRT and LRLS…QTAD. Over residues 481–491 the composition is skewed to basic residues; sequence NIRKSKAKKNP. Composition is skewed to polar residues over residues 493-510 and 522-553; these read SRGQ…QHGN and QSSL…SSSG. Basic and acidic residues predominate over residues 664–682; that stretch reads TREKDKQSASSRESLEQKE. Polar residues-rich tracts occupy residues 683 to 707 and 728 to 749; these read NIAT…SNAS and ESQQ…QKEI. At serine 763 the chain carries Phosphoserine. Positions 788-1006 constitute a Rho-GAP domain; it reads SSLQARCAYE…FILGNYRDIF (219 aa).

Functionally, GTPase-activating protein (GAP) for CDC42 and/or RHO1. The chain is Rho-type GTPase-activating protein 2 (RGA2) from Saccharomyces cerevisiae (strain ATCC 204508 / S288c) (Baker's yeast).